A 366-amino-acid chain; its full sequence is MLIWLVELADHFQFFNLFRYITFRTGAALFTSALIVFLFGPAMIASLRIRQGKGQPIRADGPQTHFKKAGTPTMGGLMILTGIVVSSLLWADLSSIYVVSTLLVTLGFGAIGFYDDYLKVTKQSEKGFSGKARLGIEFVIAAVAVFFMMQAALSAGAAGSTFGSSVTFPFFKDLMLNLGYFFVLFGGFVIVGAGNSVNLTDGLDGLAIVPVMIASAAFGLIAYLAGNAVFANYLQIHFVPGTGELAVILGAVIGAGLGFLWFNAPPAAIFMGDTGSLALGGLIGTVAVATKHEIVMIIIGGLFVIETLSVIIQVFWFKRTGHRVFLMAPIHHHFEKKGWTESQVVIRFWIIAVILAMVGLSTLKLR.

Helical transmembrane passes span 27–47, 71–91, 93–113, 138–158, 174–194, 205–225, 245–265, 268–288, 297–317, and 343–363; these read AALF…IASL, TPTM…LLWA, LSSI…AIGF, FVIA…AGAA, LMLN…VGAG, GLAI…AYLA, LAVI…FNAP, AIFM…TVAV, IIIG…VFWF, and QVVI…LSTL.

The protein belongs to the glycosyltransferase 4 family. MraY subfamily. Requires Mg(2+) as cofactor.

The protein resides in the cell inner membrane. The enzyme catalyses UDP-N-acetyl-alpha-D-muramoyl-L-alanyl-gamma-D-glutamyl-meso-2,6-diaminopimeloyl-D-alanyl-D-alanine + di-trans,octa-cis-undecaprenyl phosphate = di-trans,octa-cis-undecaprenyl diphospho-N-acetyl-alpha-D-muramoyl-L-alanyl-D-glutamyl-meso-2,6-diaminopimeloyl-D-alanyl-D-alanine + UMP. The protein operates within cell wall biogenesis; peptidoglycan biosynthesis. In terms of biological role, catalyzes the initial step of the lipid cycle reactions in the biosynthesis of the cell wall peptidoglycan: transfers peptidoglycan precursor phospho-MurNAc-pentapeptide from UDP-MurNAc-pentapeptide onto the lipid carrier undecaprenyl phosphate, yielding undecaprenyl-pyrophosphoryl-MurNAc-pentapeptide, known as lipid I. This chain is Phospho-N-acetylmuramoyl-pentapeptide-transferase, found in Rhizobium meliloti (strain 1021) (Ensifer meliloti).